The sequence spans 208 residues: Truncated thymidylate kinase (208 aa).

Belongs to the thymidylate kinase family.

Functionally, catalyzes the conversion of dTMP to dTDP. The chain is Truncated thymidylate kinase (TMK) from Ornithodoros (relapsing fever ticks).